The sequence spans 248 residues: Adenylate kinase isoenzyme 6 homolog HBR1 (248 aa).

ATP contacts are provided by G19, G21, K22, S23, and S24. The NMPbind stretch occupies residues 49–72; that stretch reads NISEIAKERDCIESYDAKLDTSIV. The interval 124–134 is LID; it reads TRNYNDLKLQE. R125 is a binding site for ATP. The interval 188–248 is disordered; sequence DGVSNELNKQ…EMEHTEDIAQ (61 aa). The segment covering 202–238 has biased composition (acidic residues); it reads DSSDEGDDNSDSDEYELEEDEQEEEEEREEYDEETNE. Residues 239 to 248 are compositionally biased toward basic and acidic residues; sequence EMEHTEDIAQ.

It belongs to the adenylate kinase family. AK6 subfamily. In terms of assembly, interacts with small ribosomal subunit protein uS11. Not a structural component of 43S pre-ribosomes, but transiently interacts with them by binding to uS11.

Its subcellular location is the cytoplasm. The protein localises to the nucleus. It carries out the reaction AMP + ATP = 2 ADP. The catalysed reaction is ATP + H2O = ADP + phosphate + H(+). Its function is as follows. Broad-specificity nucleoside monophosphate (NMP) kinase that catalyzes the reversible transfer of the terminal phosphate group between nucleoside triphosphates and monophosphates. Also has ATPase activity. Involved in the late cytoplasmic maturation steps of the 40S ribosomal particles, specifically 18S rRNA maturation. While NMP activity is not required for ribosome maturation, ATPase activity is. Associates transiently with small ribosomal subunit protein uS11. ATP hydrolysis breaks the interaction with uS11. May temporarily remove uS11 from the ribosome to enable a conformational change of the ribosomal RNA that is needed for the final maturation step of the small ribosomal subunit. Its NMP activity may have a role in nuclear energy homeostasis. Induces transcription of mating-type proteins ALPHA1 and ALPHA2 and moderately represses transcription of mating-type protein A1 in response to hemoglobin and growth signals. Involved in the induction of a high affinity fibronectin receptor by sub-inhibitory dosages of caspofungin. The sequence is that of Adenylate kinase isoenzyme 6 homolog HBR1 (HBR1) from Candida albicans (strain SC5314 / ATCC MYA-2876) (Yeast).